An 879-amino-acid polypeptide reads, in one-letter code: Oxysterol-binding protein-related protein 5 (879 aa).

Positions methionine 1–proline 73 are disordered. Serine 12 is modified (phosphoserine). Positions valine 93–aspartate 123 form a coiled coil. A PH domain is found at valine 126–arginine 243. The interval lysine 254–threonine 341 is disordered. 2 stretches are compositionally biased toward basic and acidic residues: residues phenylalanine 300–proline 309 and threonine 316–serine 325. A 1,2-diacyl-sn-glycero-3-phospho-(1D-myo-inositol 4-phosphate) contacts are provided by residues leucine 384 to leucine 389, lysine 446 to asparagine 449, and histidine 478 to histidine 479. Residues leucine 384 to leucine 389 and asparagine 449 contribute to the a 1,2-diacyl-sn-glycero-3-phospho-L-serine site. An a 1,2-diacyl-sn-glycero-3-phospho-L-serine-binding site is contributed by serine 504. The a 1,2-diacyl-sn-glycero-3-phospho-(1D-myo-inositol 4-phosphate) site is built by lysine 670, glutamate 674, and arginine 678. Residues threonine 742–proline 806 are disordered. Serine 747 is subject to Phosphoserine. Basic and acidic residues predominate over residues proline 750–serine 765. Polar residues predominate over residues aspartate 766–glutamate 783. Residues serine 860–leucine 878 traverse the membrane as a helical segment.

It belongs to the OSBP family. As to expression, ubiquitously expressed.

Its subcellular location is the endoplasmic reticulum membrane. Its function is as follows. Lipid transporter involved in lipid countertransport between the endoplasmic reticulum and the plasma membrane: specifically exchanges phosphatidylserine with phosphatidylinositol 4-phosphate (PI4P), delivering phosphatidylserine to the plasma membrane in exchange for PI4P, which is degraded by the SAC1/SACM1L phosphatase in the endoplasmic reticulum. Binds phosphatidylserine and PI4P in a mutually exclusive manner. May cooperate with NPC1 to mediate the exit of cholesterol from endosomes/lysosomes. Binds 25-hydroxycholesterol and cholesterol. The chain is Oxysterol-binding protein-related protein 5 (OSBPL5) from Homo sapiens (Human).